The primary structure comprises 495 residues: MIPVVALVGRPNVGKSTLFNRLTRTRDALVADFPGLTRDRKYGRAEVEGHEFIIVDTGGIDGTEDGVETRMAGQSLVAIEEADIVLFMVDARAGLMPADEGIAKHLRSREKTTVLVANKTDGLDPDMVTADFYSLGMGEVYPIAASHGRGVTSLLETVLLPFVQDEIEEPVELSEEEENAAYWAALEADEQASEEEAEDDFNPEDLPIKLAIVGRPNVGKSTLTNRILGEERVVVFDMPGTTRDSIYIPMVRDEREYVLIDTAGVRKRGKVTETVEKFSVIKTLQAIEDANVVLLVIDAREGISDQDLSLLGFILNSGRSLVIVVNKWDGLSQEVREQVKETLDLRLGFIDFARIHFISALHGSGVGNLFESVTEAYACATRRVSTAMLTRIMQMASDDHQPPLVRGRRVKLKYAHAGGYNPPIVVIHGNQVKDLPDSYKRYLMNYYRRSLDVMGTPIRIQFKEGENPFADKRNTLTPNQLRKRKRLMSHIKKGK.

EngA-type G domains are found at residues 3–166 (PVVA…VQDE) and 208–381 (IKLA…ACAT). GTP contacts are provided by residues 9 to 16 (GRPNVGKS), 56 to 60 (DTGGI), 118 to 121 (NKTD), 214 to 221 (GRPNVGKS), 261 to 265 (DTAGV), and 326 to 329 (NKWD). Residues 382-466 (RRVSTAMLTR…PIRIQFKEGE (85 aa)) enclose the KH-like domain.

This sequence belongs to the TRAFAC class TrmE-Era-EngA-EngB-Septin-like GTPase superfamily. EngA (Der) GTPase family. As to quaternary structure, associates with the 50S ribosomal subunit.

Functionally, GTPase that plays an essential role in the late steps of ribosome biogenesis. This is GTPase Der from Pectobacterium carotovorum subsp. carotovorum (strain PC1).